We begin with the raw amino-acid sequence, 240 residues long: Aliphatic sulfonates import ATP-binding protein SsuB (240 aa).

In terms of domain architecture, ABC transporter spans 6 to 227 (IQLSKLRKNF…VKDRHFACFE (222 aa)). An ATP-binding site is contributed by 38–45 (GESGCGKS).

This sequence belongs to the ABC transporter superfamily. Aliphatic sulfonates importer (TC 3.A.1.17.2) family. As to quaternary structure, the complex is composed of two ATP-binding proteins (SsuB), two transmembrane proteins (SsuC) and a solute-binding protein (SsuA).

The protein resides in the cell inner membrane. The enzyme catalyses ATP + H2O + aliphatic sulfonate-[sulfonate-binding protein]Side 1 = ADP + phosphate + aliphatic sulfonateSide 2 + [sulfonate-binding protein]Side 1.. Functionally, part of the ABC transporter complex SsuABC involved in aliphatic sulfonates import. Responsible for energy coupling to the transport system. The protein is Aliphatic sulfonates import ATP-binding protein SsuB of Zymomonas mobilis subsp. mobilis (strain ATCC 31821 / ZM4 / CP4).